A 389-amino-acid chain; its full sequence is Brix domain-containing protein C1B9.03c (389 aa).

One can recognise a Brix domain in the interval serine 28 to glycine 309. Residues glutamate 323–valine 350 are compositionally biased toward basic and acidic residues. Residues glutamate 323–glutamate 389 are disordered. Residues arginine 351–aspartate 362 show a composition bias toward basic residues. Residue serine 377 is modified to Phosphoserine. Residues asparagine 379–glutamate 389 are compositionally biased toward polar residues.

This chain is Brix domain-containing protein C1B9.03c, found in Schizosaccharomyces pombe (strain 972 / ATCC 24843) (Fission yeast).